The chain runs to 376 residues: Non-structural protein NS2 (376 aa).

The segment covering 163-188 has biased composition (basic and acidic residues); that stretch reads EEREKGAVEQPHKPAFKTERGMNRPD. A disordered region spans residues 163–201; the sequence is EEREKGAVEQPHKPAFKTERGMNRPDSDEDQNPAGGVVN.

It belongs to the orbivirus non-structural protein NS2 family.

Functionally, single-stranded RNA-binding protein. This chain is Non-structural protein NS2 (Segment-8), found in Antilocapra americana (Pronghorn).